A 508-amino-acid chain; its full sequence is Lysine--tRNA ligase (508 aa).

2 residues coordinate Mg(2+): glutamate 418 and glutamate 425.

The protein belongs to the class-II aminoacyl-tRNA synthetase family. Homodimer. Mg(2+) is required as a cofactor.

It localises to the cytoplasm. It carries out the reaction tRNA(Lys) + L-lysine + ATP = L-lysyl-tRNA(Lys) + AMP + diphosphate. The polypeptide is Lysine--tRNA ligase (Burkholderia pseudomallei (strain 1710b)).